The following is a 514-amino-acid chain: 2,3-bisphosphoglycerate-independent phosphoglycerate mutase (514 aa).

Mn(2+) is bound by residues Asp-14 and Ser-64. Ser-64 serves as the catalytic Phosphoserine intermediate. Residues His-125, 155–156 (RD), Arg-187, Arg-193, 263–266 (RADR), and Lys-336 contribute to the substrate site. Mn(2+) contacts are provided by Asp-403, His-407, Asp-444, His-445, and His-463.

The protein belongs to the BPG-independent phosphoglycerate mutase family. In terms of assembly, monomer. It depends on Mn(2+) as a cofactor.

It carries out the reaction (2R)-2-phosphoglycerate = (2R)-3-phosphoglycerate. It participates in carbohydrate degradation; glycolysis; pyruvate from D-glyceraldehyde 3-phosphate: step 3/5. Its function is as follows. Catalyzes the interconversion of 2-phosphoglycerate and 3-phosphoglycerate. This Escherichia coli (strain ATCC 8739 / DSM 1576 / NBRC 3972 / NCIMB 8545 / WDCM 00012 / Crooks) protein is 2,3-bisphosphoglycerate-independent phosphoglycerate mutase.